A 521-amino-acid polypeptide reads, in one-letter code: GMP synthase [glutamine-hydrolyzing] (521 aa).

The Glutamine amidotransferase type-1 domain occupies 5–197 (KILILDFGSQ…VLDICGAQPG (193 aa)). C81 (nucleophile) is an active-site residue. Active-site residues include H171 and E173. A GMPS ATP-PPase domain is found at 198–390 (WTMPNYIEEA…LGLPREMVYR (193 aa)). Residue 225-231 (SGGVDSS) coordinates ATP.

Homodimer.

It catalyses the reaction XMP + L-glutamine + ATP + H2O = GMP + L-glutamate + AMP + diphosphate + 2 H(+). Its pathway is purine metabolism; GMP biosynthesis; GMP from XMP (L-Gln route): step 1/1. Its function is as follows. Catalyzes the synthesis of GMP from XMP. This is GMP synthase [glutamine-hydrolyzing] (guaA) from Neisseria meningitidis serogroup B (strain ATCC BAA-335 / MC58).